Reading from the N-terminus, the 147-residue chain is Hemoglobin subunit epsilon (147 aa).

One can recognise a Globin domain in the interval 3–147 (HFTAEEKSTI…VATALAHKYH (145 aa)). Phosphoserine occurs at positions 14 and 51. Histidine 64 and histidine 93 together coordinate heme b.

It belongs to the globin family. Heterotetramer of two alpha chains and two epsilon chains in early embryonic hemoglobin Gower-2; two zeta chains and two epsilon chains in early embryonic hemoglobin Gower-1. As to expression, red blood cells.

In terms of biological role, the epsilon chain is a beta-type chain of early mammalian embryonic hemoglobin. This chain is Hemoglobin subunit epsilon (HBE1), found in Microcebus murinus (Gray mouse lemur).